The sequence spans 218 residues: Leucine-rich repeat protein 1 (218 aa).

Positions 1-27 (MASRNYRWELFAASLTLTLALIHLVEA) are cleaved as a signal peptide. 4 LRR repeats span residues 94-117 (EHLQ…LGNL), 119-140 (NLIS…SLGK), 141-165 (LKSL…LTAI), and 167-190 (SLKV…PFAH).

As to quaternary structure, interacts with HIR1.

Functionally, involved in plant defense response. In Arabidopsis thaliana (Mouse-ear cress), this protein is Leucine-rich repeat protein 1.